The chain runs to 752 residues: Exocyst complex component EXO84B (752 aa).

Disordered regions lie at residues 511–532 (QTGQ…NPEQ) and 724–752 (TKGN…HGSY). Basic and acidic residues predominate over residues 515 to 532 (RTDDLRRPLDRQNRNPEQ). A compositionally biased stretch (low complexity) spans 733-752 (SPTASVSAQSVSSARSHGSY).

It belongs to the EXO84 family. In terms of assembly, the exocyst complex is composed of SEC3, SEC5, SEC6, SEC8, SEC10, EXO70A1 and EXO84B. Interacts with SEC6, SEC10, SEC15B and EXO70A1. Interacts with EXO70B1. Binds directly to B1L.

The protein localises to the cytoplasm. Its subcellular location is the cytosol. It localises to the perinuclear region. It is found in the cytoskeleton. The protein resides in the phragmoplast. The protein localises to the secreted. Its subcellular location is the cell wall. It localises to the cell membrane. Functionally, component of the exocyst complex involved in the docking of exocytic vesicles with fusion sites on the plasma membrane during regulated or polarized secretion. Involved in polarized cell growth and organ morphogenesis. During cytokinesis, involved in cell plate initiation, cell plate maturation and formation of new primary cell wall. Probable component of an exocyst subcomplex specifically involved in autophagy-related, Golgi-independent membrane traffic to the vacuole. Regulates autophagosome formation and autophagy-related Golgi-independent import into the vacuole. Mediates ABCG36/PEN3 outer-membrane polarity at the periphery of lateral root cap and root epidermal cells. This is Exocyst complex component EXO84B from Arabidopsis thaliana (Mouse-ear cress).